Reading from the N-terminus, the 137-residue chain is Small ribosomal subunit protein uS8 (137 aa).

Belongs to the universal ribosomal protein uS8 family. As to quaternary structure, part of the 30S ribosomal subunit. Contacts proteins S5 and S12.

In terms of biological role, one of the primary rRNA binding proteins, it binds directly to 16S rRNA central domain where it helps coordinate assembly of the platform of the 30S subunit. This is Small ribosomal subunit protein uS8 from Metamycoplasma arthritidis (strain 158L3-1) (Mycoplasma arthritidis).